The sequence spans 787 residues: DNA ligase (787 aa).

NAD(+) contacts are provided by residues 32 to 36, 81 to 82, and Glu-121; these read DVEYD and SL. Catalysis depends on Lys-123, which acts as the N6-AMP-lysine intermediate. NAD(+) is bound by residues Arg-144, Glu-181, Lys-297, and Lys-321. Residues Cys-415, Cys-418, Cys-445, and Cys-451 each coordinate Zn(2+). The BRCT domain occupies 703 to 787; the sequence is VEGLPLAGQT…RLTELGVAVD (85 aa).

Belongs to the NAD-dependent DNA ligase family. LigA subfamily. Mg(2+) is required as a cofactor. It depends on Mn(2+) as a cofactor.

It catalyses the reaction NAD(+) + (deoxyribonucleotide)n-3'-hydroxyl + 5'-phospho-(deoxyribonucleotide)m = (deoxyribonucleotide)n+m + AMP + beta-nicotinamide D-nucleotide.. DNA ligase that catalyzes the formation of phosphodiester linkages between 5'-phosphoryl and 3'-hydroxyl groups in double-stranded DNA using NAD as a coenzyme and as the energy source for the reaction. It is essential for DNA replication and repair of damaged DNA. This chain is DNA ligase, found in Pseudomonas savastanoi pv. phaseolicola (strain 1448A / Race 6) (Pseudomonas syringae pv. phaseolicola (strain 1448A / Race 6)).